The primary structure comprises 187 residues: Ribosome-recycling factor (187 aa).

Belongs to the RRF family.

Its subcellular location is the cytoplasm. Functionally, responsible for the release of ribosomes from messenger RNA at the termination of protein biosynthesis. May increase the efficiency of translation by recycling ribosomes from one round of translation to another. The protein is Ribosome-recycling factor of Rhodopseudomonas palustris (strain BisA53).